Reading from the N-terminus, the 600-residue chain is Torsin-1A-interacting protein 1 (600 aa).

A compositionally biased stretch (basic and acidic residues) spans 1 to 14 (MAGEGQRAEPEREG). 2 disordered regions span residues 1–261 (MAGE…YKES) and 310–346 (MRSI…QPKS). Residues 1–354 (MAGEGQRAEP…KSVSSVKTKR (354 aa)) lie on the Nuclear side of the membrane. At serine 61 the chain carries Phosphoserine. Basic and acidic residues-rich tracts occupy residues 71 to 81 (FEPRAAKEKAR), 91 to 102 (FRPDSAKEEVRE), and 116 to 125 (RLHEAEEMQT). Residues serine 137, serine 145, serine 156, serine 158, serine 159, and serine 189 each carry the phosphoserine modification. Low complexity predominate over residues 192–203 (PLISLRRPPLRS). Over residues 219–232 (EEGETEENDQDSFD) the composition is skewed to acidic residues. Threonine 223 carries the phosphothreonine modification. Residues serine 230, serine 233, and serine 244 each carry the phosphoserine modification. The segment covering 247–261 (SGDQTTRSSSQYKES) has biased composition (polar residues). Phosphoserine is present on serine 322. Residue lysine 325 forms a Glycyl lysine isopeptide (Lys-Gly) (interchain with G-Cter in SUMO2) linkage. Over residues 325-346 (KSELGNQSPSTSNQQMTGQPKS) the composition is skewed to polar residues. Serine 332 is modified (phosphoserine). Residues 355–371 (YWPFAVIAALLIGGFLY) traverse the membrane as a helical segment. The Perinuclear space portion of the chain corresponds to 372–600 (TRPPEAETTA…ENDLKKGICL (229 aa)). Residues 373–600 (RPPEAETTAV…ENDLKKGICL (228 aa)) are interaction with TOR1A. A coiled-coil region spans residues 376–452 (EAETTAVQEF…SEQIADAYSS (77 aa)). N-linked (GlcNAc...) asparagine glycosylation is present at asparagine 416.

Belongs to the TOR1AIP family. Interacts with ATP1B4. Interacts with TOR1A (ATP-bound). Interacts with TOR1B, TOR2A and TOR3A. Interacts with VIM.

It localises to the nucleus inner membrane. Required for nuclear membrane integrity. Induces TOR1A and TOR1B ATPase activity and is required for their location on the nuclear membrane. Binds to A- and B-type lamins. Possible role in membrane attachment and assembly of the nuclear lamina. The chain is Torsin-1A-interacting protein 1 (TOR1AIP1) from Bos taurus (Bovine).